Consider the following 891-residue polypeptide: DNA mismatch repair protein MutS (891 aa).

646–653 (GPNMAGKS) provides a ligand contact to ATP.

This sequence belongs to the DNA mismatch repair MutS family.

In terms of biological role, this protein is involved in the repair of mismatches in DNA. It is possible that it carries out the mismatch recognition step. This protein has a weak ATPase activity. The chain is DNA mismatch repair protein MutS from Rickettsia typhi (strain ATCC VR-144 / Wilmington).